The primary structure comprises 474 residues: Replication-associated protein (474 aa).

The short motif at 248-255 (GKRFQEDR) is the Nuclear localization signal element. The tract at residues 455 to 474 (AFAPGFSLTSEPEPKRRRFF) is disordered.

The protein resides in the host nucleus. In terms of biological role, plays an essential for the replication of viral DNA. Presumably cleaves viral genomic dsRNA replicative form to initiate rolling circle replication. The sequence is that of Replication-associated protein from Avon-Heathcote Estuary associated kieseladnavirus (AHEaBV).